The chain runs to 566 residues: MDGTAESREGTQFGPYRLRRLVGRGGMGDVYEAEDTVRERIVALKLMSETLSSDPVFRTRMQREARTAGRLQEPHVVPIHDFGEIDGQLYVDMRLINGVDLAAMLRRQGPLAPPRAVAIVRQIGSALDAAHAAGATHRDVKPENILVSADDFAYLVDFGIASATTDEKLTQLGNTVGTLYYMAPERFSESHATYRADIYALTCVLYECLTGSPPYQGDQLSVMGAHINQAIPRPSTVRPGIPVAFDAVIARGMAKNPEDRYVTCGDLSAAAHAALATADQDRATDILRRSQVAKLPVPSTHPVSPGTRWPQPTPWAGGAPPWGPPSSPLPRSARQPWLWVGVAVAVVVALAGGLGIALAHPWRSSGPRTSAPPPPPPADAVELRVLNDGVFVGSSVAPTTIDIFNEPICPPCGSFIRSYASDIDTAVADKQLAVRYHLLNFLDDQSHSKNYSTRAVAASYCVAGQNDPKLYASFYSALFGSDFQPQENAASDRTDAELAHLAQTVGAEPTAISCIKSGADLGTAQTKATNASETLAGFNASGTPFVWDGSMVVNYQDPSWLARLIG.

Residues 1–337 (MDGTAESREG…PLPRSARQPW (337 aa)) lie on the Cytoplasmic side of the membrane. A Phosphoserine; by autocatalysis modification is found at Ser7. Residue Thr11 is modified to Phosphothreonine; by autocatalysis. One can recognise a Protein kinase domain in the interval 16-275 (YRLRRLVGRG…DLSAAAHAAL (260 aa)). Residues 22–30 (VGRGGMGDV) and Lys45 each bind ATP. Phosphothreonine; by autocatalysis occurs at positions 50 and 59. Asp139 serves as the catalytic Proton acceptor. Phosphothreonine; by autocatalysis occurs at positions 170, 175, and 178. Residues 296-330 (PVPSTHPVSPGTRWPQPTPWAGGAPPWGPPSSPLP) are disordered. The chain crosses the membrane as a helical span at residues 338–358 (LWVGVAVAVVVALAGGLGIAL). At 359–566 (AHPWRSSGPR…DPSWLARLIG (208 aa)) the chain is on the extracellular side.

It belongs to the protein kinase superfamily. Ser/Thr protein kinase family. In terms of assembly, homodimer. In terms of processing, autophosphorylated on serine and threonine residues. Dephosphorylated by PstP.

The protein resides in the cell membrane. The catalysed reaction is L-seryl-[protein] + ATP = O-phospho-L-seryl-[protein] + ADP + H(+). The enzyme catalyses L-threonyl-[protein] + ATP = O-phospho-L-threonyl-[protein] + ADP + H(+). Its function is as follows. A serine/threonine-protein kinase, acts on HupB in vitro, modifying at least 2 Ser and 8 Thr residues. Important for bacterial survival in the host during infection. The sequence is that of Serine/threonine-protein kinase PknE from Mycobacterium tuberculosis (strain ATCC 25177 / H37Ra).